The sequence spans 135 residues: Probable histone H2A.2 (135 aa).

The protein belongs to the histone H2A family. In terms of assembly, the nucleosome is a histone octamer containing two molecules each of H2A, H2B, H3 and H4 assembled in one H3-H4 heterotetramer and two H2A-H2B heterodimers. The octamer wraps approximately 147 bp of DNA.

The protein resides in the nucleus. Its subcellular location is the chromosome. Its function is as follows. Core component of nucleosome. Nucleosomes wrap and compact DNA into chromatin, limiting DNA accessibility to the cellular machineries which require DNA as a template. Histones thereby play a central role in transcription regulation, DNA repair, DNA replication and chromosomal stability. DNA accessibility is regulated via a complex set of post-translational modifications of histones, also called histone code, and nucleosome remodeling. This chain is Probable histone H2A.2, found in Oryza sativa subsp. indica (Rice).